Consider the following 1100-residue polypeptide: SLIT-ROBO Rho GTPase-activating protein 2 (1100 aa).

The F-BAR domain occupies 19-324; sequence TQVKEIRAQL…AAENLEANSD (306 aa). 2 coiled-coil regions span residues 170-201 and 363-400; these read YNMD…HEEK and GELI…IQDM. The segment covering 181-203 has biased composition (basic and acidic residues); the sequence is LKEAEKQEEKQMSRSVRHEEKQT. The tract at residues 181–210 is disordered; the sequence is LKEAEKQEEKQMSRSVRHEEKQTPRSPDSL. The Rho-GAP domain occupies 496–680; it reads VRKQEAIQII…TIIIHHESIF (185 aa). The SH3 domain maps to 738–797; it reads SDPIEAIARFDYSGRTNRELSFKKGASLLLYSRASDDWWEGRHNGTEGLVPHQYIVVQDM. Disordered stretches follow at residues 800–835 and 852–938; these read GYAG…TGGH and EATS…PLDP. The segment covering 807–823 has biased composition (basic and acidic residues); that stretch reads PKADLEGSHDSVEEKVS. A compositionally biased stretch (polar residues) spans 919–932; the sequence is RKSTPTGRSKSFSN. Residues 945-972 are a coiled coil; it reads EHSSQDIEATMNTALSELRELERQSNVK. The segment at 986–1100 is disordered; it reads KSGGTSEPSS…PPPTDKSCPV (115 aa). Polar residues-rich tracts occupy residues 987 to 997 and 1008 to 1049; these read SGGTSEPSSPL and SQHP…GSTF. Residues 1067–1081 are compositionally biased toward low complexity; it reads SSSAGGSPAMGSPTT. The span at 1082-1094 shows a compositional bias: pro residues; that stretch reads TIPPTPPPPPPPT.

It localises to the cell membrane. It is found in the cell projection. The protein resides in the dendritic spine. Its subcellular location is the postsynaptic density. The protein localises to the postsynaptic cell membrane. It localises to the lamellipodium. It is found in the cytoplasmic vesicle. The protein resides in the phagosome. Its subcellular location is the nucleus. The protein localises to the cytoplasm. It localises to the cytosol. Its function is as follows. Postsynaptic RAC1 GTPase activating protein (GAP) that plays a key role in neuronal morphogenesis and migration mainly during development of the cerebral cortex. Regulates excitatory and inhibitory synapse maturation and density in cortical pyramidal neurons. Mechanistically, acts by binding and deforming membranes, thereby regulating actin dynamics to regulate cell migration and differentiation. This Danio rerio (Zebrafish) protein is SLIT-ROBO Rho GTPase-activating protein 2 (srgap2).